A 220-amino-acid polypeptide reads, in one-letter code: Early protein OPG038 (220 aa).

The N-terminal stretch at 1-17 (MVYKLVLLFCIASLGYS) is a signal peptide. N-linked (GlcNAc...) asparagine; by host glycosylation is found at asparagine 49, asparagine 79, asparagine 118, and asparagine 154.

Belongs to the orthopoxvirus OPG038 family. Homooligomer. Interacts with host CD80 and CD86 when secreted. Post-translationally, glycosylated by host.

It is found in the host endoplasmic reticulum. The protein localises to the secreted. In terms of biological role, plays a role in immune evasion. When secreted, inhibits T-cell activation by preventing the binding of host CD80 and CD86 to soluble CTLA4 and CD28. In the infected cell, may inhibits host NF kappa B activation. The chain is Early protein OPG038 (OPG038) from Cynomys gunnisoni (Gunnison's prairie dog).